The following is a 494-amino-acid chain: UPF0371 protein SP_0341 (494 aa).

Belongs to the UPF0371 family.

The sequence is that of UPF0371 protein SP_0341 from Streptococcus pneumoniae serotype 4 (strain ATCC BAA-334 / TIGR4).